The sequence spans 65 residues: Large ribosomal subunit protein bL35 (65 aa).

The disordered stretch occupies residues M1–F22. Residues A10–F22 are compositionally biased toward basic residues.

Belongs to the bacterial ribosomal protein bL35 family.

This is Large ribosomal subunit protein bL35 from Escherichia coli O127:H6 (strain E2348/69 / EPEC).